Consider the following 160-residue polypeptide: Transcriptional regulator MraZ (160 aa).

2 SpoVT-AbrB domains span residues 5-50 and 93-136; these read KFET…EGVY and AIEC…SQAE.

This sequence belongs to the MraZ family. In terms of assembly, forms oligomers.

It is found in the cytoplasm. The protein resides in the nucleoid. The sequence is that of Transcriptional regulator MraZ from Geotalea uraniireducens (strain Rf4) (Geobacter uraniireducens).